An 83-amino-acid polypeptide reads, in one-letter code: Cytochrome b559 subunit alpha (83 aa).

The chain crosses the membrane as a helical span at residues 21–35 (VIHSITIPSLFIAGW). H23 is a binding site for heme.

It belongs to the PsbE/PsbF family. As to quaternary structure, heterodimer of an alpha subunit and a beta subunit. PSII is composed of 1 copy each of membrane proteins PsbA, PsbB, PsbC, PsbD, PsbE, PsbF, PsbH, PsbI, PsbJ, PsbK, PsbL, PsbM, PsbT, PsbX, PsbY, PsbZ, Psb30/Ycf12, at least 3 peripheral proteins of the oxygen-evolving complex and a large number of cofactors. It forms dimeric complexes. It depends on heme b as a cofactor.

Its subcellular location is the plastid. It is found in the chloroplast thylakoid membrane. Functionally, this b-type cytochrome is tightly associated with the reaction center of photosystem II (PSII). PSII is a light-driven water:plastoquinone oxidoreductase that uses light energy to abstract electrons from H(2)O, generating O(2) and a proton gradient subsequently used for ATP formation. It consists of a core antenna complex that captures photons, and an electron transfer chain that converts photonic excitation into a charge separation. The sequence is that of Cytochrome b559 subunit alpha from Zygnema circumcarinatum (Green alga).